A 508-amino-acid polypeptide reads, in one-letter code: ATP synthase subunit alpha, chloroplastic (508 aa).

170 to 177 contributes to the ATP binding site; the sequence is GDRQTGKT.

This sequence belongs to the ATPase alpha/beta chains family. In terms of assembly, F-type ATPases have 2 components, F(1) - the catalytic core - and F(0) - the membrane proton channel. F(1) has five subunits: alpha(3), beta(3), gamma(1), delta(1), epsilon(1). F(0) has four main subunits: a(1), b(1), b'(1) and c(10-14). The alpha and beta chains form an alternating ring which encloses part of the gamma chain. F(1) is attached to F(0) by a central stalk formed by the gamma and epsilon chains, while a peripheral stalk is formed by the delta, b and b' chains.

It localises to the plastid. The protein localises to the chloroplast thylakoid membrane. The enzyme catalyses ATP + H2O + 4 H(+)(in) = ADP + phosphate + 5 H(+)(out). Functionally, f(1)F(0) ATP synthase produces ATP from ADP in the presence of a proton or sodium gradient. F-type ATPases consist of two structural domains, F(1) containing the extramembraneous catalytic core and F(0) containing the membrane proton channel, linked together by a central stalk and a peripheral stalk. During catalysis, ATP synthesis in the catalytic domain of F(1) is coupled via a rotary mechanism of the central stalk subunits to proton translocation. Its function is as follows. The alpha chain is a regulatory subunit. The sequence is that of ATP synthase subunit alpha, chloroplastic from Chlamydomonas reinhardtii (Chlamydomonas smithii).